The sequence spans 171 residues: Sec-independent protein translocase protein TatB (171 aa).

A helical membrane pass occupies residues 1 to 21 (MFDIGFSELLLVFIIGLVVLG). The interval 117 to 171 (KDNETAHEGVTPAAAQTQASSPEQKPETTPEPVVKPAADAEPKTAAPSPSSSDKP) is disordered. Residues 130 to 139 (AAQTQASSPE) are compositionally biased toward polar residues.

The protein belongs to the TatB family. As to quaternary structure, the Tat system comprises two distinct complexes: a TatABC complex, containing multiple copies of TatA, TatB and TatC subunits, and a separate TatA complex, containing only TatA subunits. Substrates initially bind to the TatABC complex, which probably triggers association of the separate TatA complex to form the active translocon.

Its subcellular location is the cell inner membrane. Functionally, part of the twin-arginine translocation (Tat) system that transports large folded proteins containing a characteristic twin-arginine motif in their signal peptide across membranes. Together with TatC, TatB is part of a receptor directly interacting with Tat signal peptides. TatB may form an oligomeric binding site that transiently accommodates folded Tat precursor proteins before their translocation. The polypeptide is Sec-independent protein translocase protein TatB (Escherichia coli O6:K15:H31 (strain 536 / UPEC)).